Consider the following 321-residue polypeptide: Ornithine carbamoyltransferase (321 aa).

Carbamoyl phosphate is bound by residues 53 to 56, Gln80, Arg104, and 131 to 134; these read STRT and HPCQ. L-ornithine contacts are provided by residues Asn166, Asp230, and 234-235; that span reads SM. Carbamoyl phosphate-binding positions include 270 to 271 and Arg298; that span reads CL.

Belongs to the aspartate/ornithine carbamoyltransferase superfamily. OTCase family.

Its subcellular location is the cytoplasm. The catalysed reaction is carbamoyl phosphate + L-ornithine = L-citrulline + phosphate + H(+). It participates in amino-acid degradation; L-arginine degradation via ADI pathway; carbamoyl phosphate from L-arginine: step 2/2. In terms of biological role, reversibly catalyzes the transfer of the carbamoyl group from carbamoyl phosphate (CP) to the N(epsilon) atom of ornithine (ORN) to produce L-citrulline. The chain is Ornithine carbamoyltransferase from Bifidobacterium longum subsp. infantis (strain ATCC 15697 / DSM 20088 / JCM 1222 / NCTC 11817 / S12).